The chain runs to 425 residues: Serine--tRNA ligase (425 aa).

233–235 (TAE) contacts L-serine. Residue 264-266 (RRE) participates in ATP binding. Residue E287 coordinates L-serine. 351–354 (EISS) contacts ATP. S385 lines the L-serine pocket.

The protein belongs to the class-II aminoacyl-tRNA synthetase family. Type-1 seryl-tRNA synthetase subfamily. Homodimer. The tRNA molecule binds across the dimer.

The protein resides in the cytoplasm. The enzyme catalyses tRNA(Ser) + L-serine + ATP = L-seryl-tRNA(Ser) + AMP + diphosphate + H(+). It catalyses the reaction tRNA(Sec) + L-serine + ATP = L-seryl-tRNA(Sec) + AMP + diphosphate + H(+). It participates in aminoacyl-tRNA biosynthesis; selenocysteinyl-tRNA(Sec) biosynthesis; L-seryl-tRNA(Sec) from L-serine and tRNA(Sec): step 1/1. Functionally, catalyzes the attachment of serine to tRNA(Ser). Is also able to aminoacylate tRNA(Sec) with serine, to form the misacylated tRNA L-seryl-tRNA(Sec), which will be further converted into selenocysteinyl-tRNA(Sec). The chain is Serine--tRNA ligase from Prochlorococcus marinus (strain MIT 9515).